The following is a 501-amino-acid chain: MLGVVGVLLLVAFATLLLWDFLWRRRGNGILPGPRPLPFLGNLLMYRGLDPEQIMDFVKKNQRKYGRLYRVWILHQLAVFSTDPRDIEFVLSSQQHITKNNLYKLLNCWLGDGLLMSTGRKWHGRRKIITPTFHFKILEQFVEIFDQQSAVMVEQLQSRADGKTPINIFPVICLTALDIIAETAMGTKINAQKNPNLPYVQAVNDVTNILIKRFIHAWQRVDWIFRLTQPTEAKRQDKAIKVMHDFTENIIRERRETLVNNSKETTPEEEVNFLGQKRRMALLDVLLQSTIDGAPLSDEDIREEVDTFMFEGHDTTTSAISFCLYEISRHPEVQQRLQQEIRDVLGEDRKSPVTLRDLGELKFMENVIKESLRLHPPVPMIGRWFAEDVEIRGKHIPAGTNFTMGIFVLLRDPEYFESPDEFRPERFDADVPQIHPYAYIPFSAGPRNCIGQKFAMLEMKSTVSKLLRHFELLPLGPEPRHSMNIVLRSANGVHLGLKPRA.

2 residues coordinate heme: E311 and C449.

This sequence belongs to the cytochrome P450 family. Heme serves as cofactor.

It is found in the endoplasmic reticulum membrane. It localises to the microsome membrane. Functionally, involved in the metabolism of insect hormones and in the breakdown of synthetic insecticides. This chain is Cytochrome P450 4d2 (Cyp4d2), found in Drosophila melanogaster (Fruit fly).